The primary structure comprises 413 residues: ATP phosphoribosyltransferase regulatory subunit (413 aa).

The disordered stretch occupies residues 1 to 21 (MRSRAARKFSTTPGTRDVLPP).

Belongs to the class-II aminoacyl-tRNA synthetase family. HisZ subfamily. As to quaternary structure, heteromultimer composed of HisG and HisZ subunits.

Its subcellular location is the cytoplasm. Its pathway is amino-acid biosynthesis; L-histidine biosynthesis; L-histidine from 5-phospho-alpha-D-ribose 1-diphosphate: step 1/9. Functionally, required for the first step of histidine biosynthesis. May allow the feedback regulation of ATP phosphoribosyltransferase activity by histidine. This chain is ATP phosphoribosyltransferase regulatory subunit, found in Rubrobacter xylanophilus (strain DSM 9941 / JCM 11954 / NBRC 16129 / PRD-1).